A 557-amino-acid chain; its full sequence is Copine-4 (557 aa).

C2 domains lie at 3 to 131 (KMSN…SKSL) and 137 to 264 (TAGK…VQWE). The Ca(2+) site is built by D170, D176, D232, D234, and D240. The 203-residue stretch at 305-507 (QIQFTVAIDF…VLRDIVQFVP (203 aa)) folds into the VWFA domain.

The protein belongs to the copine family. In terms of assembly, interacts (via VWFA domain) with ACTB, BCOR, BICD2, CCDC22, CDC42BPB, CEP162, MYCBP2, NONO, PDCD6, PITPNM2, RDX, SKIL, SKT, SPTBN1, UBE2O and WTAP. The cofactor is Ca(2+).

Probable calcium-dependent phospholipid-binding protein that may play a role in calcium-mediated intracellular processes. This is Copine-4 from Mus musculus (Mouse).